A 117-amino-acid chain; its full sequence is Pterin-4-alpha-carbinolamine dehydratase 2 (117 aa).

Lysine 101, lysine 105, and lysine 112 each carry N6-acetyllysine; alternate. N6-succinyllysine; alternate is present on residues lysine 101, lysine 105, and lysine 112.

The protein belongs to the pterin-4-alpha-carbinolamine dehydratase family. Homotetramer. Interacts with DYRK1B.

It catalyses the reaction (4aS,6R)-4a-hydroxy-L-erythro-5,6,7,8-tetrahydrobiopterin = (6R)-L-erythro-6,7-dihydrobiopterin + H2O. Functionally, involved in tetrahydrobiopterin biosynthesis. Seems to both prevent the formation of 7-pterins and accelerate the formation of quinonoid-BH2. In terms of biological role, regulates the dimerization of homeodomain protein HNF-1-alpha and enhances its transcriptional activity. This chain is Pterin-4-alpha-carbinolamine dehydratase 2 (PCBD2), found in Pongo abelii (Sumatran orangutan).